A 159-amino-acid polypeptide reads, in one-letter code: Large ribosomal subunit protein mL50 (159 aa).

Belongs to the mitochondrion-specific ribosomal protein mL50 family. As to quaternary structure, component of the mitochondrial ribosome large subunit (39S) which comprises a 16S rRNA and about 50 distinct proteins.

It is found in the mitochondrion. In Bos taurus (Bovine), this protein is Large ribosomal subunit protein mL50 (MRPL50).